A 286-amino-acid polypeptide reads, in one-letter code: Bifunctional protein FolD (286 aa).

NADP(+) is bound by residues 164–166, serine 193, and isoleucine 234; that span reads GRS.

It belongs to the tetrahydrofolate dehydrogenase/cyclohydrolase family. Homodimer.

It catalyses the reaction (6R)-5,10-methylene-5,6,7,8-tetrahydrofolate + NADP(+) = (6R)-5,10-methenyltetrahydrofolate + NADPH. The catalysed reaction is (6R)-5,10-methenyltetrahydrofolate + H2O = (6R)-10-formyltetrahydrofolate + H(+). It participates in one-carbon metabolism; tetrahydrofolate interconversion. Functionally, catalyzes the oxidation of 5,10-methylenetetrahydrofolate to 5,10-methenyltetrahydrofolate and then the hydrolysis of 5,10-methenyltetrahydrofolate to 10-formyltetrahydrofolate. This chain is Bifunctional protein FolD, found in Nitratidesulfovibrio vulgaris (strain ATCC 29579 / DSM 644 / CCUG 34227 / NCIMB 8303 / VKM B-1760 / Hildenborough) (Desulfovibrio vulgaris).